Reading from the N-terminus, the 80-residue chain is Phycocyanin-645 alpha-1 chain (80 aa).

Residue Arg16 participates in (2R,3E)-phycocyanobilin binding. Residues Cys18, Gln24, Tyr25, and Lys40 each coordinate mesobiliverdin. 15,16-dihydrobiliverdin is bound by residues Pro71 and Ile73.

Belongs to the phycoerythrin family. In terms of assembly, heterotetramer of 2 different alpha chains and 2 identical beta chains which form 2 alpha-beta heterodimers within the heterotetramer. In terms of processing, contains one phycocyanobilin chromophore, one mesobiliverdin chromophore and one 15,16-dihydrobiliverdin chromophore with binding mediated by both the alpha and beta subunits.

Its subcellular location is the plastid. It is found in the chloroplast thylakoid membrane. Light-harvesting photosynthetic tetrapyrrole chromophore-protein from the phycobiliprotein complex. The protein is Phycocyanin-645 alpha-1 chain of Chroomonas sp.